Here is a 341-residue protein sequence, read N- to C-terminus: Queuosine 5'-phosphate N-glycosylase/hydrolase (341 aa).

Residue M1 is modified to N-acetylmethionine. H53, F237, D239, D314, Y315, and D319 together coordinate queuine. The active-site Nucleophile or transition state stabilizer is the D239.

This sequence belongs to the QNG1 protein family.

The enzyme catalyses queuosine 5'-phosphate + H2O = queuine + D-ribose 5-phosphate. Catalyzes the hydrolysis of queuosine 5'-phosphate, releasing the nucleobase queuine (q). Is required for salvage of queuine from exogenous queuosine (Q) that is imported and then converted to queuosine 5'-phosphate intracellularly. The chain is Queuosine 5'-phosphate N-glycosylase/hydrolase from Bos taurus (Bovine).